The sequence spans 211 residues: FMN-dependent NADH:quinone oxidoreductase 2 (211 aa).

FMN contacts are provided by residues serine 10 and 17–19; that span reads SRS.

It belongs to the azoreductase type 1 family. In terms of assembly, homodimer. It depends on FMN as a cofactor.

It catalyses the reaction 2 a quinone + NADH + H(+) = 2 a 1,4-benzosemiquinone + NAD(+). It carries out the reaction N,N-dimethyl-1,4-phenylenediamine + anthranilate + 2 NAD(+) = 2-(4-dimethylaminophenyl)diazenylbenzoate + 2 NADH + 2 H(+). Functionally, quinone reductase that provides resistance to thiol-specific stress caused by electrophilic quinones. Also exhibits azoreductase activity. Catalyzes the reductive cleavage of the azo bond in aromatic azo compounds to the corresponding amines. This chain is FMN-dependent NADH:quinone oxidoreductase 2, found in Listeria monocytogenes serotype 4b (strain F2365).